The chain runs to 35 residues: uncharacterized protein (35 aa).

Residues 14–34 form a helical membrane-spanning segment; it reads VVVLLAICGAMLLLRWAAMIW.

It localises to the membrane. This is an uncharacterized protein from Escherichia coli (strain K12).